We begin with the raw amino-acid sequence, 318 residues long: Forkhead box protein I2 (318 aa).

Residues 1–30 (MATYCDDLGPSSAPPGQAQATAHPPGYEPG) form a disordered region. A DNA-binding region (fork-head) is located at residues 102-196 (RPPYSYSALI…DNGNFRRKRK (95 aa)).

It is found in the nucleus. Functionally, possible transcriptional activator. The sequence is that of Forkhead box protein I2 (FOXI2) from Homo sapiens (Human).